Consider the following 622-residue polypeptide: DNA-directed RNA polymerase subunit gamma (622 aa).

Cys-70, Cys-72, Cys-85, and Cys-88 together coordinate Zn(2+). The Mg(2+) site is built by Asp-466, Asp-468, and Asp-470.

Belongs to the RNA polymerase beta' chain family. RpoC1 subfamily. As to quaternary structure, in cyanobacteria the RNAP catalytic core is composed of 2 alpha, 1 beta, 1 beta', 1 gamma and 1 omega subunit. When a sigma factor is associated with the core the holoenzyme is formed, which can initiate transcription. Mg(2+) is required as a cofactor. It depends on Zn(2+) as a cofactor.

It catalyses the reaction RNA(n) + a ribonucleoside 5'-triphosphate = RNA(n+1) + diphosphate. DNA-dependent RNA polymerase catalyzes the transcription of DNA into RNA using the four ribonucleoside triphosphates as substrates. The sequence is that of DNA-directed RNA polymerase subunit gamma from Cyanothece sp. (strain PCC 7425 / ATCC 29141).